A 574-amino-acid polypeptide reads, in one-letter code: R-linalool synthase, chloroplastic (574 aa).

The transit peptide at M1 to L40 directs the protein to the chloroplast. Over residues I52–N61 the composition is skewed to polar residues. The segment at I52–S71 is disordered. Residues R287, D324, D328, R467, and D470 each contribute to the (2E)-geranyl diphosphate site. Residues D324 and D328 each contribute to the Mg(2+) site. The DDXXD motif signature appears at D324–D328. Mg(2+) contacts are provided by D470, T474, and E478.

The protein belongs to the terpene synthase family. Tpsb subfamily. The cofactor is Mg(2+). Requires Mn(2+) as cofactor.

The protein resides in the plastid. It localises to the chloroplast. It carries out the reaction (2E)-geranyl diphosphate + H2O = (R)-linalool + diphosphate. It functions in the pathway secondary metabolite biosynthesis; terpenoid biosynthesis. In terms of biological role, monoterpene synthase that catalyzes the formation of (3R)-linalool from geranyl diphosphate. The polypeptide is R-linalool synthase, chloroplastic (LIS) (Ocimum basilicum (Sweet basil)).